Reading from the N-terminus, the 197-residue chain is Imidazoleglycerol-phosphate dehydratase (197 aa).

Belongs to the imidazoleglycerol-phosphate dehydratase family.

It is found in the cytoplasm. It carries out the reaction D-erythro-1-(imidazol-4-yl)glycerol 3-phosphate = 3-(imidazol-4-yl)-2-oxopropyl phosphate + H2O. The protein operates within amino-acid biosynthesis; L-histidine biosynthesis; L-histidine from 5-phospho-alpha-D-ribose 1-diphosphate: step 6/9. The polypeptide is Imidazoleglycerol-phosphate dehydratase (Rhodopseudomonas palustris (strain ATCC BAA-98 / CGA009)).